A 360-amino-acid polypeptide reads, in one-letter code: UDP-N-acetylglucosamine--N-acetylmuramyl-(pentapeptide) pyrophosphoryl-undecaprenol N-acetylglucosamine transferase (360 aa).

Positions 198 and 289 each coordinate UDP-N-acetyl-alpha-D-glucosamine.

This sequence belongs to the glycosyltransferase 28 family. MurG subfamily.

The protein resides in the cell membrane. The catalysed reaction is Mur2Ac(oyl-L-Ala-gamma-D-Glu-L-Lys-D-Ala-D-Ala)-di-trans,octa-cis-undecaprenyl diphosphate + UDP-N-acetyl-alpha-D-glucosamine = beta-D-GlcNAc-(1-&gt;4)-Mur2Ac(oyl-L-Ala-gamma-D-Glu-L-Lys-D-Ala-D-Ala)-di-trans,octa-cis-undecaprenyl diphosphate + UDP + H(+). Its pathway is cell wall biogenesis; peptidoglycan biosynthesis. Functionally, cell wall formation. Catalyzes the transfer of a GlcNAc subunit on undecaprenyl-pyrophosphoryl-MurNAc-pentapeptide (lipid intermediate I) to form undecaprenyl-pyrophosphoryl-MurNAc-(pentapeptide)GlcNAc (lipid intermediate II). The polypeptide is UDP-N-acetylglucosamine--N-acetylmuramyl-(pentapeptide) pyrophosphoryl-undecaprenol N-acetylglucosamine transferase (Streptococcus pyogenes serotype M49 (strain NZ131)).